We begin with the raw amino-acid sequence, 1315 residues long: MLNRENKTAITRKGMVSNRLNKFSIRKYTVGTASILVGTTLIFGLGNQEAKAAESTNKELNEATTSASDNQSSDKVDMQQLNQEDNTKNDNQKEMVSSQGNETTSNGNKLIEKESVQSTTGNKVEVSTAKSDEQASPKSTNEDLNTKQTISNQEALQPDLQENKSVVNVQPTNEENKKVDAKTESTTLNVKSDAIKSNDETLVDNNSNSNNENNADIILPKSTAPKRLNTRMRIAAVQPSSTEAKNVNDLITSNTTLTVVDADKNNKIVPAQDYLSLKSQITVDDKVKSGDYFTIKYSDTVQVYGLNPEDIKNIGDIKDPNNGETIATAKHDTANNLITYTFTDYVDRFNSVQMGINYSIYMDADTIPVSKNDVEFNVTIGNTTTKTTANIQYPDYVVNEKNSIGSAFTETVSHVGNKENPGYYKQTIYVNPSENSLTNAKLKVQAYHSSYPNNIGQINKDVTDIKIYQVPKGYTLNKGYDVNTKELTDVTNQYLQKITYGDNNSAVIDFGNADSAYVVMVNTKFQYTNSESPTLVQMATLSSTGNKSVSTGNALGFTNNQSGGAGQEVYKIGNYVWEDTNKNGVQELGEKGVGNVTVTVFDNNTNTKVGEAVTKEDGSYLIPNLPNGDYRVEFSNLPKGYEVTPSKQGNNEELDSNGLSSVITVNGKDNLSADLGIYKPKYNLGDYVWEDTNKNGIQDQDEKGISGVTVTLKDENGNVLKTVTTDADGKYKFTDLDNGNYKVEFTTPEGYTPTTVTSGSDIEKDSNGLTTTGVINGADNMTLDSGFYKTPKYNLGNYVWEDTNKDGKQDSTEKGISGVTVTLKNENGEVLQTTKTDKDGKYQFTGLENGTYKVEFETPSGYTPTQVGSGTDEGIDSNGTSTTGVIKDKDNDTIDSGFYKPTYNLGDYVWEDTNKNGVQDKDEKGISGVTVTLKDENDKVLKTVTTDENGKYQFTDLNNGTYKVEFETPSGYTPTSVTSGNDTEKDSNGLTTTGVIKDADNMTLDSGFYKTPKYSLGDYVWYDSNKDGKQDSTEKGIKDVKVTLLNEKGEVIGTTKTDENGKYCFDNLDSGKYKVIFEKPAGLTQTGTNTTEDDKDADGGEVDVTITDHDDFTLDNGYYEEETSDSDSDSDSDSDSDRDSDSDSDSDSDSDSDSDSDSDSDSDSDSDRDSDSDSDSDSDSDSDSDSDSDSDSDSDSDSDSDSDSDSDSDSDSDSDSDSDSDSDSDSDSDSDSDSDSDSDSDSDSDSDSDSDSDSDAGKHTPVKPMSTTKDHHNKAKALPETGNENSGSNNATLFGGLFAALGSLLLFGRRKKQNK.

Positions 1–35 are cleaved as a signal peptide; the sequence is MLNRENKTAITRKGMVSNRLNKFSIRKYTVGTASI. The short motif at 23–34 is the YSIRK-G/S signaling motif element; sequence FSIRKYTVGTAS. Residues 36–568 form a ligand binding A region region; that stretch reads LVGTTLIFGL…NNQSGGAGQE (533 aa). Positions 54-185 are disordered; that stretch reads ESTNKELNEA…NKKVDAKTES (132 aa). Composition is skewed to polar residues over residues 62-71 and 94-108; these read EATTSASDNQ and EMVS…SNGN. Residues 130–145 are compositionally biased toward basic and acidic residues; the sequence is KSDEQASPKSTNEDLN. 2 stretches are compositionally biased toward polar residues: residues 146 to 155 and 163 to 173; these read TKQTISNQEA and NKSVVNVQPTN. A compositionally biased stretch (basic and acidic residues) spans 174 to 183; the sequence is EENKKVDAKT. CNA-B domains follow at residues 569–680, 681–791, 792–901, 902–1012, and 1013–1123; these read VYKI…IYKP, KYNL…YKTP, KYNL…FYKP, TYNL…YKTP, and KYSL…EEET. Disordered stretches follow at residues 857 to 883, 972 to 992, and 1078 to 1291; these read ETPS…TSTT, YTPT…GLTT, and EKPA…SNNA. 2 stretches are compositionally biased toward polar residues: residues 860 to 869 and 972 to 981; these read SGYTPTQVGS and YTPTSVTSGN. Acidic residues-rich tracts occupy residues 1091–1101, 1118–1134, 1142–1164, and 1172–1254; these read TEDDKDADGGE, YYEE…DSDS, and SDSD…DSDS. Positions 1278-1282 match the LPXTG sorting signal motif; it reads LPETG. Residue threonine 1281 is modified to Pentaglycyl murein peptidoglycan amidated threonine. The propeptide at 1282 to 1315 is removed by sortase; sequence GNENSGSNNATLFGGLFAALGSLLLFGRRKKQNK.

The protein belongs to the serine-aspartate repeat-containing protein (SDr) family. As to quaternary structure, interacts with host DSG1; this interaction increases S.aureus adherence to keratinocytes. In terms of processing, anchored to the cell wall by sortase A.

It is found in the secreted. The protein resides in the cell wall. Cell surface-associated calcium-binding protein which plays an important role in adhesion and pathogenesis. Mediates interactions with components of the extracellular matrix such as host DSG1 to promote bacterial adhesion to host cells. Contributes to the resistance to killing by innate immune components such as neutrophils present in blood and thus attenuates bacterial clearance. This chain is Serine-aspartate repeat-containing protein D (sdrD), found in Staphylococcus aureus (strain Newman).